We begin with the raw amino-acid sequence, 161 residues long: MDFRIGQGYDVHQLVPGRPLIIGGVTIPYERGLLGHSDADVLLHAITDALFGAAALGDIGRHFSDTDAAFKGADSRVLLRECAARVKAAGFTIQNVDSTVIAQAPKLAPHIDGMRANIAADLGLPLERVNVKAKTNEKLGYLGRGEGIEAQAAALLVKAGA.

A divalent metal cation is bound by residues aspartate 10 and histidine 12. 4-CDP-2-C-methyl-D-erythritol 2-phosphate contacts are provided by residues 10-12 (DVH) and 36-37 (HS). Histidine 44 lines the a divalent metal cation pocket. Residues 58–60 (DIG), 63–67 (FSDTD), and arginine 144 each bind 4-CDP-2-C-methyl-D-erythritol 2-phosphate.

It belongs to the IspF family. Homotrimer. Requires a divalent metal cation as cofactor.

The enzyme catalyses 4-CDP-2-C-methyl-D-erythritol 2-phosphate = 2-C-methyl-D-erythritol 2,4-cyclic diphosphate + CMP. It participates in isoprenoid biosynthesis; isopentenyl diphosphate biosynthesis via DXP pathway; isopentenyl diphosphate from 1-deoxy-D-xylulose 5-phosphate: step 4/6. Functionally, involved in the biosynthesis of isopentenyl diphosphate (IPP) and dimethylallyl diphosphate (DMAPP), two major building blocks of isoprenoid compounds. Catalyzes the conversion of 4-diphosphocytidyl-2-C-methyl-D-erythritol 2-phosphate (CDP-ME2P) to 2-C-methyl-D-erythritol 2,4-cyclodiphosphate (ME-CPP) with a corresponding release of cytidine 5-monophosphate (CMP). The polypeptide is 2-C-methyl-D-erythritol 2,4-cyclodiphosphate synthase (Burkholderia ambifaria (strain MC40-6)).